A 2058-amino-acid chain; its full sequence is Unconventional myosin-X (2058 aa).

An N-acetylmethionine modification is found at Met1. Residues 63-739 form the Myosin motor domain; it reads EGVDDMASLT…LEQKLEKRRE (677 aa). ATP is bound by residues Asn104, Tyr113, 160–165, and Asn215; that span reads GAGKTE. Residues 619 to 641 are actin-binding; sequence LHSLMATLSSSNPFFVRCIKPNM. 3 consecutive IQ domains span residues 742–763, 764–787, and 788–817; these read VSHA…KQYR, KVLY…RFLH, and LKKA…EKRE. Residues 814-883 form an SAH region; the sequence is EKREQEEKKK…LTRELEKQKE (70 aa). Disordered stretches follow at residues 819–840 and 847–866; these read EEKK…RERE and ELRA…EALQ. The segment covering 847–861 has biased composition (basic and acidic residues); the sequence is ELRAQQEEETRKQQE. Residues 884 to 934 adopt a coiled-coil conformation; that stretch reads NKQVEEILRLEKEIEDLQRMKEQQELSLTEASLQKLQERRDQELRRLEEEA. Residues Ser962, Ser965, and Ser968 each carry the phosphoserine modification. A disordered region spans residues 964 to 1090; that stretch reads GSEFSSELAE…DLPSPDGDYD (127 aa). Positions 989–1003 are enriched in acidic residues; that stretch reads PEEEVDEGFEADDDA. Polar residues predominate over residues 1040-1049; sequence VVPTSPSADS. Positions 1060 to 1071 are enriched in low complexity; that stretch reads SGSLHNSSSGES. The residue at position 1158 (Thr1158) is a Phosphothreonine. 2 PH domains span residues 1212-1310 and 1392-1497; these read EALK…QVHA and EFIV…NVTD. The MyTH4 domain occupies 1547 to 1695; sequence LPYGDINLNL…PSRDEIEALI (149 aa). Residues 1700–2044 form the FERM domain; sequence MTSTVYCHGG…AYISMIVKKR (345 aa).

The protein belongs to the TRAFAC class myosin-kinesin ATPase superfamily. Myosin family. As to quaternary structure, monomer, when in an inactive conformation in the cytosol. Homodimer in its active, membrane-bound conformation; antiparallel coiled coil-mediated dimer formation. Interacts strongly with CALM3 and weakly with CALM, the CALM3 interaction is essential for function in filopodial extension and motility. Interacts with ECPAS. Interacts with NEO1. Interacts with ITGB1 and ITGB3. Interacts with VASP. Interacts with DCC and ITGB5; the presence of DCC inhibits ITGB5 binding. Interacts with tubulin; ITGB5 or DCC binding inhibits tubulin binding. In terms of processing, the initiator methionine for isoform Headless is removed. As to expression, ubiquitous.

Its subcellular location is the cytoplasm. It is found in the cytosol. It localises to the cell projection. The protein localises to the lamellipodium. The protein resides in the ruffle. Its subcellular location is the cytoskeleton. It is found in the filopodium tip. It localises to the cell cortex. The protein localises to the filopodium membrane. Its function is as follows. Myosins are actin-based motor molecules with ATPase activity. Unconventional myosins serve in intracellular movements. MYO10 binds to actin filaments and actin bundles and functions as a plus end-directed motor. Moves with higher velocity and takes larger steps on actin bundles than on single actin filaments. The tail domain binds to membranous compartments containing phosphatidylinositol 3,4,5-trisphosphate or integrins, and mediates cargo transport along actin filaments. Regulates cell shape, cell spreading and cell adhesion. Stimulates the formation and elongation of filopodia. In hippocampal neurons it induces the formation of dendritic filopodia by trafficking the actin-remodeling protein VASP to the tips of filopodia, where it promotes actin elongation. Plays a role in formation of the podosome belt in osteoclasts. Functions as a dominant-negative regulator of isoform 1, suppressing its filopodia-inducing and axon outgrowth-promoting activities. In hippocampal neurons, it increases VASP retention in spine heads to induce spine formation and spine head expansion. The chain is Unconventional myosin-X (MYO10) from Homo sapiens (Human).